The following is a 218-amino-acid chain: ATP-dependent Clp protease proteolytic subunit 2 (218 aa).

The protein belongs to the peptidase S14 family. As to quaternary structure, fourteen ClpP subunits assemble into 2 heptameric rings which stack back to back to give a disk-like structure with a central cavity, resembling the structure of eukaryotic proteasomes.

It localises to the cytoplasm. It catalyses the reaction Hydrolysis of proteins to small peptides in the presence of ATP and magnesium. alpha-casein is the usual test substrate. In the absence of ATP, only oligopeptides shorter than five residues are hydrolyzed (such as succinyl-Leu-Tyr-|-NHMec, and Leu-Tyr-Leu-|-Tyr-Trp, in which cleavage of the -Tyr-|-Leu- and -Tyr-|-Trp bonds also occurs).. Functionally, cleaves peptides in various proteins in a process that requires ATP hydrolysis. Has a chymotrypsin-like activity. Plays a major role in the degradation of misfolded proteins. The sequence is that of ATP-dependent Clp protease proteolytic subunit 2 from Gloeobacter violaceus (strain ATCC 29082 / PCC 7421).